Consider the following 563-residue polypeptide: NAD-dependent malic enzyme (563 aa).

Residue Y101 is the Proton donor of the active site. R154 serves as a coordination point for NAD(+). K172 functions as the Proton acceptor in the catalytic mechanism. Residues E243, D244, and D267 each contribute to the a divalent metal cation site. 2 residues coordinate NAD(+): D267 and N416.

It belongs to the malic enzymes family. Homotetramer. Mg(2+) is required as a cofactor. Mn(2+) serves as cofactor.

It catalyses the reaction (S)-malate + NAD(+) = pyruvate + CO2 + NADH. The catalysed reaction is oxaloacetate + H(+) = pyruvate + CO2. The chain is NAD-dependent malic enzyme from Pseudomonas syringae pv. syringae (strain B728a).